A 254-amino-acid chain; its full sequence is 4-hydroxy-tetrahydrodipicolinate reductase (254 aa).

7-12 (GASGRI) contacts NAD(+). Arginine 35 is a binding site for NADP(+). Residues 91–93 (GTT) and 115–118 (AHNM) contribute to the NAD(+) site. Histidine 147 serves as the catalytic Proton donor/acceptor. Histidine 148 contributes to the (S)-2,3,4,5-tetrahydrodipicolinate binding site. Residue lysine 151 is the Proton donor of the active site. A (S)-2,3,4,5-tetrahydrodipicolinate-binding site is contributed by 157-158 (GT).

The protein belongs to the DapB family.

It localises to the cytoplasm. It carries out the reaction (S)-2,3,4,5-tetrahydrodipicolinate + NAD(+) + H2O = (2S,4S)-4-hydroxy-2,3,4,5-tetrahydrodipicolinate + NADH + H(+). The enzyme catalyses (S)-2,3,4,5-tetrahydrodipicolinate + NADP(+) + H2O = (2S,4S)-4-hydroxy-2,3,4,5-tetrahydrodipicolinate + NADPH + H(+). It functions in the pathway amino-acid biosynthesis; L-lysine biosynthesis via DAP pathway; (S)-tetrahydrodipicolinate from L-aspartate: step 4/4. Catalyzes the conversion of 4-hydroxy-tetrahydrodipicolinate (HTPA) to tetrahydrodipicolinate. This chain is 4-hydroxy-tetrahydrodipicolinate reductase, found in Helicobacter pylori (strain ATCC 700392 / 26695) (Campylobacter pylori).